A 281-amino-acid polypeptide reads, in one-letter code: Bifunctional protein FolD (281 aa).

NADP(+)-binding positions include 164-166 (GAS), I189, and I230.

This sequence belongs to the tetrahydrofolate dehydrogenase/cyclohydrolase family. As to quaternary structure, homodimer.

It carries out the reaction (6R)-5,10-methylene-5,6,7,8-tetrahydrofolate + NADP(+) = (6R)-5,10-methenyltetrahydrofolate + NADPH. The catalysed reaction is (6R)-5,10-methenyltetrahydrofolate + H2O = (6R)-10-formyltetrahydrofolate + H(+). The protein operates within one-carbon metabolism; tetrahydrofolate interconversion. In terms of biological role, catalyzes the oxidation of 5,10-methylenetetrahydrofolate to 5,10-methenyltetrahydrofolate and then the hydrolysis of 5,10-methenyltetrahydrofolate to 10-formyltetrahydrofolate. This chain is Bifunctional protein FolD, found in Sulfurovum sp. (strain NBC37-1).